Reading from the N-terminus, the 276-residue chain is Pirin-like protein CC_0481 (276 aa).

This sequence belongs to the pirin family.

The chain is Pirin-like protein CC_0481 from Caulobacter vibrioides (strain ATCC 19089 / CIP 103742 / CB 15) (Caulobacter crescentus).